Reading from the N-terminus, the 247-residue chain is Probable chemoreceptor glutamine deamidase CheD (247 aa).

Residues 204-247 (KRPAAPQPARPRIELFGGRGTTPGAGSQAAGSPYAANLSRKQEA) form a disordered region.

It belongs to the CheD family.

It carries out the reaction L-glutaminyl-[protein] + H2O = L-glutamyl-[protein] + NH4(+). Probably deamidates glutamine residues to glutamate on methyl-accepting chemotaxis receptors (MCPs), playing an important role in chemotaxis. This Burkholderia orbicola (strain MC0-3) protein is Probable chemoreceptor glutamine deamidase CheD.